We begin with the raw amino-acid sequence, 210 residues long: Outer surface protein C (210 aa).

The N-terminal stretch at Met-1–Ser-18 is a signal peptide. Cys-19 carries N-palmitoyl cysteine lipidation. The S-diacylglycerol cysteine moiety is linked to residue Cys-19.

The protein belongs to the OspC lipoprotein family. As to quaternary structure, homodimer. Binds human plasminogen on the bacterial surface, also binds human plasmin. Interacts with tick I.ricinus salivary protein Iric-1. Interacts with human complement C4 beta chain (C4B); whole bacteria bind to wells coated with C4b. Binding is inhibited by human complement factor C2.

It is found in the cell outer membrane. The protein resides in the cell surface. A major immunodominant protein in mammalian hosts. Required for the initial stages of mammalian infection. Interaction with tick I.ricinus salivary protein Salp15 protects the bacteria from antibody-mediated killing in vitro and in vivo. Inhibits macrophage-mediated phagocytosis of the bacteria. Binds human plasminogen; this probably confers an extracellular protease activity on the bacteria that allows it to traverse tissue. Binds human complement C4-B, which may inhibit the complement cascade. Experiments in mice suggest it may play another role after initial infection. The sequence is that of Outer surface protein C from Borreliella burgdorferi (strain ATCC 35210 / DSM 4680 / CIP 102532 / B31) (Borrelia burgdorferi).